The chain runs to 584 residues: Alpha-glucosidase MAL12 (584 aa).

The Nucleophile role is filled by aspartate 214. The active-site Proton donor is glutamate 276.

Belongs to the glycosyl hydrolase 13 family.

The catalysed reaction is Hydrolysis of terminal, non-reducing (1-&gt;4)-linked alpha-D-glucose residues with release of alpha-D-glucose.. This chain is Alpha-glucosidase MAL12 (MAL12), found in Saccharomyces cerevisiae (strain ATCC 204508 / S288c) (Baker's yeast).